Reading from the N-terminus, the 232-residue chain is Orotidine 5'-phosphate decarboxylase (232 aa).

Substrate contacts are provided by residues Asp-13, Lys-35, 62-71 (DLKFHDIPNT), Thr-122, Arg-182, Gln-191, Gly-211, and Arg-212. Lys-64 functions as the Proton donor in the catalytic mechanism.

This sequence belongs to the OMP decarboxylase family. Type 1 subfamily. In terms of assembly, homodimer.

The catalysed reaction is orotidine 5'-phosphate + H(+) = UMP + CO2. It functions in the pathway pyrimidine metabolism; UMP biosynthesis via de novo pathway; UMP from orotate: step 2/2. Catalyzes the decarboxylation of orotidine 5'-monophosphate (OMP) to uridine 5'-monophosphate (UMP). The protein is Orotidine 5'-phosphate decarboxylase of Pseudomonas fluorescens (strain Pf0-1).